The sequence spans 261 residues: NAD kinase (261 aa).

The Proton acceptor role is filled by aspartate 54. NAD(+) is bound by residues 54 to 55, 123 to 124, arginine 150, aspartate 152, and 163 to 168; these read DG, ND, and TAYSLS.

It belongs to the NAD kinase family. The cofactor is a divalent metal cation.

It is found in the cytoplasm. The catalysed reaction is NAD(+) + ATP = ADP + NADP(+) + H(+). Its function is as follows. Involved in the regulation of the intracellular balance of NAD and NADP, and is a key enzyme in the biosynthesis of NADP. Catalyzes specifically the phosphorylation on 2'-hydroxyl of the adenosine moiety of NAD to yield NADP. This Caldicellulosiruptor bescii (strain ATCC BAA-1888 / DSM 6725 / KCTC 15123 / Z-1320) (Anaerocellum thermophilum) protein is NAD kinase.